The primary structure comprises 169 residues: Regulator of G-protein signaling rgs-2 (169 aa).

One can recognise an RGS domain in the interval 39-158 (GWSQSFENLM…FLASNIYKTV (120 aa)).

May be phosphorylated and activated by egl-4. In terms of tissue distribution, expressed in a subset of neurons including ventral cord and head- and tail-ganglia neurons. Also expressed in non-neuronal cells including pharyngeal and uterine muscles.

Functionally, weakly inhibits G protein signaling in nervous system, interacting preferentially with the G(O) subfamily member goa-1. In vitro, it acts as a GTPase activator of goa-1. Rgs-1 and rgs-2 redundantly adjust signaling when worms are fed to allow rapid induction of egg-laying behavior. Modulates chemotaxis responses by regulating negatively the sensitivity to quinine in ASH sensory neurons. The chain is Regulator of G-protein signaling rgs-2 (rgs-2) from Caenorhabditis elegans.